We begin with the raw amino-acid sequence, 75 residues long: Putative defensin-like protein 271 (75 aa).

A signal peptide spans 1–23 (MTSMKLHIVALCIIVSFLVNVQS). 4 disulfides stabilise this stretch: cysteine 33–cysteine 72, cysteine 39–cysteine 61, cysteine 45–cysteine 70, and cysteine 49–cysteine 71.

The protein belongs to the DEFL family.

The protein resides in the secreted. This chain is Putative defensin-like protein 271, found in Arabidopsis thaliana (Mouse-ear cress).